The chain runs to 203 residues: uncharacterized protein (203 aa).

This is an uncharacterized protein from Chlorobium limicola.